The chain runs to 504 residues: Maturase K (504 aa).

This sequence belongs to the intron maturase 2 family. MatK subfamily.

It localises to the plastid. The protein localises to the chloroplast. Its function is as follows. Usually encoded in the trnK tRNA gene intron. Probably assists in splicing its own and other chloroplast group II introns. This Arabidopsis lyrata (Lyre-leaved rock-cress) protein is Maturase K.